We begin with the raw amino-acid sequence, 357 residues long: NADH-quinone oxidoreductase subunit H (357 aa).

The next 8 helical transmembrane spans lie at 20-40, 92-112, 127-147, 165-185, 206-226, 254-274, 294-314, and 329-349; these read WLVL…ILCV, ILFV…WAVV, LLYV…AGWA, VSYE…SGSL, FLSW…ISAV, MAFA…SCMA, IPGW…FVWF, and LGWK…AIWM.

This sequence belongs to the complex I subunit 1 family. In terms of assembly, NDH-1 is composed of 14 different subunits. Subunits NuoA, H, J, K, L, M, N constitute the membrane sector of the complex.

Its subcellular location is the cell inner membrane. The catalysed reaction is a quinone + NADH + 5 H(+)(in) = a quinol + NAD(+) + 4 H(+)(out). Its function is as follows. NDH-1 shuttles electrons from NADH, via FMN and iron-sulfur (Fe-S) centers, to quinones in the respiratory chain. The immediate electron acceptor for the enzyme in this species is believed to be ubiquinone. Couples the redox reaction to proton translocation (for every two electrons transferred, four hydrogen ions are translocated across the cytoplasmic membrane), and thus conserves the redox energy in a proton gradient. This subunit may bind ubiquinone. The sequence is that of NADH-quinone oxidoreductase subunit H from Bordetella petrii (strain ATCC BAA-461 / DSM 12804 / CCUG 43448).